A 167-amino-acid chain; its full sequence is MRCAILYSYAKERAGPLKPGVNTVEDAVKTVVAPVYDRFHLVPVELLKYADRKVGELDRHVPSNVKKVSSQARSVVSEVRRDGVSTFAKTVYSKYEPTAEQCAVSAWRKLNQLPLFPQVANAVLPKAAYCTEKYNEVIVSSAEKGYRVSAYLPLVPTEKIAKVFSGN.

This sequence belongs to the REF/SRPP family.

Its function is as follows. Plays a role in plant defense. The chain is Stress-related protein (SRP) from Phaseolus vulgaris (Kidney bean).